A 147-amino-acid chain; its full sequence is Protein SOB FIVE-LIKE 2 (147 aa).

An SOFL-A motif is present at residues 18–23 (SGWTMY). A disordered region spans residues 32–147 (HHSEVVYEEE…ASRVKVSKTK (116 aa)). Positions 37-77 (VYEEEDDGFSVKEVDDDGDGDEDDDDDDDDDSSNNESDDSM) are enriched in acidic residues. An SOFL-B motif is present at residues 76-85 (SMTSDASSWP). A compositionally biased stretch (polar residues) spans 78-93 (TSDASSWPSTHQPPRS). Residues 96–106 (NHAAAKNSNAK) show a composition bias toward low complexity. The segment covering 114-131 (NRVRDRFSDEGEESELKA) has biased composition (basic and acidic residues).

Belongs to the SOFL plant protein family. Predominantly expressed in the vascular tissues of seedlings, developing leaves, flowers and siliques, but barely detectable in roots and stems.

The protein resides in the cytoplasm. It localises to the nucleus. In terms of biological role, involved in cytokinin-mediated development. Together with SOFL2, triggers the endogenous content of specific bioactive cytokinins derived from the biosynthetic intermediates trans-zeatin riboside monophosphate (tZRMP) and N(6)-(Delta(2)-isopentenyl)adenosine monophosphate (iPRMP) such as N-glucosides trans-zeatin 7-glucoside (tZ7G), cis-zeatin 7-glucoside (cZ7G) and N(6)-(Delta(2)-isopentenyl)adenine 7-glucoside (iP7G). The sequence is that of Protein SOB FIVE-LIKE 2 from Arabidopsis thaliana (Mouse-ear cress).